We begin with the raw amino-acid sequence, 354 residues long: Probable serine acetyltransferase 2 (354 aa).

The protein belongs to the transferase hexapeptide repeat family. As to quaternary structure, homomultimer.

It catalyses the reaction L-serine + acetyl-CoA = O-acetyl-L-serine + CoA. Its pathway is amino-acid biosynthesis; L-cysteine biosynthesis; L-cysteine from L-serine: step 1/2. The protein is Probable serine acetyltransferase 2 (SAT2) of Oryza sativa subsp. japonica (Rice).